The chain runs to 307 residues: Agmatinase (307 aa).

Positions 128, 151, 153, 155, 232, and 234 each coordinate Mn(2+).

It belongs to the arginase family. Agmatinase subfamily. Mn(2+) is required as a cofactor.

The enzyme catalyses agmatine + H2O = urea + putrescine. It participates in amine and polyamine biosynthesis; putrescine biosynthesis via agmatine pathway; putrescine from agmatine: step 1/1. In terms of biological role, catalyzes the formation of putrescine from agmatine. This chain is Agmatinase, found in Photorhabdus laumondii subsp. laumondii (strain DSM 15139 / CIP 105565 / TT01) (Photorhabdus luminescens subsp. laumondii).